Reading from the N-terminus, the 599-residue chain is Calcium-dependent protein kinase 10 (599 aa).

Gly2 carries N-myristoyl glycine lipidation. Residues 27 to 110 (RQDGDDALPG…PRPRVPPVKR (84 aa)) are disordered. The span at 74-84 (VSTTDTASAEQ) shows a compositional bias: polar residues. Positions 87-98 (SKSSAGSDSGEA) are enriched in low complexity. The 259-residue stretch at 133–391 (YSLGRKLGQG…AHEVLRHPWV (259 aa)) folds into the Protein kinase domain. ATP-binding positions include 139–147 (LGQGQFGTT) and Lys162. The active-site Proton acceptor is Asp257. Positions 397–427 (APDKPLDSAVLSRMKQFSAMNKLKKMALRVI) are autoinhibitory domain. EF-hand domains lie at 434-469 (DEIAGLKEMFKMIDTDNSGQITFEELKVGLKKVGAN), 470-505 (LQESEIYALMQAADVDNSGTIDYGEFIAATLHMNKI), 506-541 (EREDHLFAAFQYFDKDGSGYITADELQLACEEFGLG), and 544-575 (QLEEMIREVDEDNDGRIDYNEFVAMMQKPTMG). The Ca(2+) site is built by Asp447, Asp449, Ser451, Gln453, Glu458, Asp483, Asp485, Ser487, Thr489, Glu494, Asp519, Asp521, Ser523, Tyr525, Glu530, Asp553, Asp555, Asp557, Arg559, and Glu564.

This sequence belongs to the protein kinase superfamily. Ser/Thr protein kinase family. CDPK subfamily. In terms of tissue distribution, expressed in roots.

The protein localises to the membrane. The enzyme catalyses L-seryl-[protein] + ATP = O-phospho-L-seryl-[protein] + ADP + H(+). It carries out the reaction L-threonyl-[protein] + ATP = O-phospho-L-threonyl-[protein] + ADP + H(+). Its activity is regulated as follows. Activated by calcium. Autophosphorylation may play an important role in the regulation of the kinase activity. Its function is as follows. May play a role in signal transduction pathways that involve calcium as a second messenger. The protein is Calcium-dependent protein kinase 10 of Oryza sativa subsp. japonica (Rice).